A 154-amino-acid chain; its full sequence is Ribosome maturation factor RimP (154 aa).

Belongs to the RimP family.

It is found in the cytoplasm. Required for maturation of 30S ribosomal subunits. The sequence is that of Ribosome maturation factor RimP from Natranaerobius thermophilus (strain ATCC BAA-1301 / DSM 18059 / JW/NM-WN-LF).